The primary structure comprises 248 residues: Ribosomal RNA small subunit methyltransferase J (248 aa).

Residues 98–99 (RD), 114–115 (ER), 150–151 (SS), and aspartate 168 contribute to the S-adenosyl-L-methionine site.

The protein belongs to the methyltransferase superfamily. RsmJ family.

The protein resides in the cytoplasm. It catalyses the reaction guanosine(1516) in 16S rRNA + S-adenosyl-L-methionine = N(2)-methylguanosine(1516) in 16S rRNA + S-adenosyl-L-homocysteine + H(+). Its function is as follows. Specifically methylates the guanosine in position 1516 of 16S rRNA. The polypeptide is Ribosomal RNA small subunit methyltransferase J (Shewanella baltica (strain OS223)).